Consider the following 262-residue polypeptide: Abhydrolase domain-containing protein AFT2-1 (262 aa).

The Peroxisomal targeting signal type 1 signature appears at 260–262; sequence SKL.

It belongs to the AB hydrolase superfamily. AKT2 hydrolase family.

Its subcellular location is the peroxisome. It participates in mycotoxin biosynthesis. Abhydrolase domain-containing protein; part of the gene clusters that mediate the biosynthesis of the host-selective toxins (HSTs) AF-toxins responsible for Alternaria black spot of strawberry disease by the strawberry pathotype. AF-toxin I and III are valine derivatives of 2,3-dyhydroxy-isovaleric acid and 2-hydroxy-isovaleric acid respectively, while AF II is an isoleucine derivative of 2-hydroxy-valeric acid. These derivatives are bound to a 9,10-epoxy-8-hydroxy-9-methyl-decatrienoic acid (EDA) moiety. On cellular level, AF-toxins affect plasma membrane of susceptible cells and cause a sudden increase in loss of K(+) after a few minutes of toxin treatment. The aldo-keto reductase AFTS1 catalyzes the conversion of 2-keto-isovaleric acid (2-KIV) to 2-hydroxy-isovaleric acid (2-HIV) by reduction of its ketone to an alcohol. The acyl-CoA ligase AFT1, the hydrolase AFT2 and the enoyl-CoA hydratases AFT3 and AFT6, but also the polyketide synthase AFT9, the acyl-CoA dehydrogenase AFT10, the cytochrome P450 monooxygenase AFT11 and the oxidoreductase AFT12 are all involved in the biosynthesis of the AK-, AF- and ACT-toxin common EDA structural moiety. The exact function of each enzyme, and of additional enzymes identified within the AF-toxin clusters have still to be determined. The chain is Abhydrolase domain-containing protein AFT2-1 from Alternaria alternata (Alternaria rot fungus).